An 81-amino-acid polypeptide reads, in one-letter code: uncharacterized protein (81 aa).

To M.thermoautotrophicum MTH886.

This is an uncharacterized protein from Methanocaldococcus jannaschii (strain ATCC 43067 / DSM 2661 / JAL-1 / JCM 10045 / NBRC 100440) (Methanococcus jannaschii).